The primary structure comprises 334 residues: D-fructose 1,6-bisphosphatase class 2/sedoheptulose 1,7-bisphosphatase (334 aa).

Positions 33, 57, 85, and 88 each coordinate Mn(2+). Substrate is bound by residues 88 to 90, Tyr-119, 164 to 166, and 186 to 188; these read EGT, RAR, and DGD. Glu-213 is a binding site for Mn(2+).

Belongs to the FBPase class 2 family. As to quaternary structure, homotetramer. Requires Mn(2+) as cofactor.

It catalyses the reaction beta-D-fructose 1,6-bisphosphate + H2O = beta-D-fructose 6-phosphate + phosphate. It carries out the reaction D-sedoheptulose 1,7-bisphosphate + H2O = D-sedoheptulose 7-phosphate + phosphate. The protein operates within carbohydrate biosynthesis; Calvin cycle. In terms of biological role, catalyzes the hydrolysis of fructose 1,6-bisphosphate (Fru 1,6-P2) and sedoheptulose 1,7-bisphosphate (Sed 1,7-P2) to fructose 6-phosphate and sedoheptulose 7-phosphate, respectively. The sequence is that of D-fructose 1,6-bisphosphatase class 2/sedoheptulose 1,7-bisphosphatase from Parasynechococcus marenigrum (strain WH8102).